Consider the following 409-residue polypeptide: Inactive serine protease 35 (409 aa).

The N-terminal stretch at 1-17 is a signal peptide; sequence MLLWLIFFTPGWTLIDG. 2 N-linked (GlcNAc...) asparagine glycosylation sites follow: Asn87 and Asn107. Residues 120-404 form the Peptidase S1 domain; that stretch reads VYGTDSRFSI…ICLWIHGNDA (285 aa). A disulfide bridge connects residues Cys150 and Cys166. A compositionally biased stretch (basic residues) spans 188–203; that stretch reads RNKSGGKKRRGSKRSR. Residues 188–246 form a disordered region; it reads RNKSGGKKRRGSKRSRRETSGGDQREGPREHLQDRVKAGRRRKQSGGGQRVSEGRPSFR. The span at 204–224 shows a compositional bias: basic and acidic residues; that stretch reads RETSGGDQREGPREHLQDRVK.

This sequence belongs to the peptidase S1 family.

The protein resides in the secreted. In Macaca mulatta (Rhesus macaque), this protein is Inactive serine protease 35 (PRSS35).